The following is an 896-amino-acid chain: Protein bride of sevenless (896 aa).

A signal peptide spans 1–31 (MKVMDALQSGRRKPLPVALLCILVTVFCVLE). Over 32–530 (CHGADLTSPT…MFWRIKMDTW (499 aa)) the chain is Extracellular. Positions 38 to 84 (TSPTKKSAPLRITKPQPTSQQAKPISITTRAPTTVASTTDDEVSSSV) are disordered. The span at 52 to 64 (PQPTSQQAKPISI) shows a compositional bias: polar residues. Residues 65 to 84 (TTRAPTTVASTTDDEVSSSV) are compositionally biased toward low complexity. Asn-183, Asn-307, Asn-474, and Asn-485 each carry an N-linked (GlcNAc...) asparagine glycan. The next 7 membrane-spanning stretches (helical) occupy residues 531–554 (VATGLTAAILGLIATLAILVFIVV), 570–588 (ILLLLSLILVFCSFVPYSI), 615–637 (VFIMTLVYCFVFSLLLCRAVMLA), 655–676 (AVICAFSVVAQVGMSVQLLVVM), 693–712 (WLWGLLAYDFALLCCVGALI), 728–748 (IVIGSVLIMVIWVAWIALSLF), and 759–781 (LGLQASGWAVLVGILIPRTFLIV). The Cytoplasmic portion of the chain corresponds to 782-896 (RGIERSDIAQ…SPDHNKITRF (115 aa)). Disordered stretches follow at residues 825–844 (SQDEVNHQSPSEIPTLPLRG) and 861–896 (ANINPQRPPPRPQQSPSRSSVSSLPPSPDHNKITRF). The span at 874-884 (QSPSRSSVSSL) shows a compositional bias: low complexity.

It belongs to the G-protein coupled receptor 3 family. In terms of tissue distribution, expressed exclusively by R8 photoreceptor cells and is internalized in a sev-dependent manner by R7 cells.

It localises to the cell membrane. Functionally, acts as a ligand for sevenless tyrosine-kinase receptor during eye development. This Drosophila melanogaster (Fruit fly) protein is Protein bride of sevenless (boss).